A 248-amino-acid chain; its full sequence is Transcription termination/antitermination protein NusG (248 aa).

Positions 197 to 227 constitute a KOW domain; the sequence is KGDQVRVIEGPFMNFTGTVEEVHPEKRKLTV.

Belongs to the NusG family. Monomer. Homodimer.

Functionally, participates in transcription elongation, termination and antitermination. The protein is Transcription termination/antitermination protein NusG of Aquifex aeolicus (strain VF5).